The following is a 218-amino-acid chain: Cytochrome b6 (218 aa).

A helical transmembrane segment spans residues Ile35 to Phe55. Cys38 is a heme c binding site. 2 residues coordinate heme b: His89 and His103. 3 helical membrane-spanning segments follow: residues Ala93–Phe113, Leu119–Tyr139, and Leu189–Ile209. Residues His190 and His205 each contribute to the heme b site.

It belongs to the cytochrome b family. PetB subfamily. The 4 large subunits of the cytochrome b6-f complex are cytochrome b6, subunit IV (17 kDa polypeptide, PetD), cytochrome f and the Rieske protein, while the 4 small subunits are PetG, PetL, PetM and PetN. The complex functions as a dimer. Requires heme b as cofactor. Heme c serves as cofactor.

The protein resides in the cellular thylakoid membrane. Functionally, component of the cytochrome b6-f complex, which mediates electron transfer between photosystem II (PSII) and photosystem I (PSI), cyclic electron flow around PSI, and state transitions. This chain is Cytochrome b6, found in Prochlorococcus marinus (strain MIT 9211).